A 455-amino-acid polypeptide reads, in one-letter code: Tyramine receptor Ser-2 (455 aa).

Over 1–60 the chain is Extracellular; the sequence is MFRNYTDSVQEMVLRAIDSIRDSVINASSAVSTTTLPPLDIPMTSMKPPSIIPTVELVLG. N-linked (GlcNAc...) asparagine glycosylation is found at Asn4 and Asn26. A helical transmembrane segment spans residues 61 to 83; that stretch reads TITYLVIIAMTVVGNTLVVVAVF. Over 84–93 the chain is Cytoplasmic; the sequence is SYRPLKKVQN. Residues 94-115 traverse the membrane as a helical segment; that stretch reads YFLVSLAASDLAVAIFVMPLHV. Topologically, residues 116–133 are extracellular; sequence VTFLAGGKWLLGVTVCQF. Cys131 and Cys209 are oxidised to a cystine. The chain crosses the membrane as a helical span at residues 134 to 154; that stretch reads FTTADILLCTSSILNLCAIAL. Residues 155–174 lie on the Cytoplasmic side of the membrane; sequence DRYWAIHNPINYAQKRTTKF. A helical membrane pass occupies residues 175-197; that stretch reads VCIVIVIVWILSMLISVPPIIGW. The Extracellular segment spans residues 198–221; sequence NNWQENMMEDSCGLSTEKAFVVFS. The chain crosses the membrane as a helical span at residues 222–243; sequence AAGSFFLPLLVMVVVYVKIFIS. Topologically, residues 244 to 370 are cytoplasmic; that stretch reads ARQRIRTNRG…VAKEKRAAKT (127 aa). Residues 371-392 form a helical membrane-spanning segment; sequence IAVIIFVFSFCWLPFFVAYVIR. Residues 393–407 are Extracellular-facing; it reads PFCETCKLHAKVEQA. Residues 408-428 form a helical membrane-spanning segment; that stretch reads FTWLGYINSSLNPFLYGILNL. Over 429–455 the chain is Cytoplasmic; that stretch reads EFRRAFKKILCPKAVLEQRRRRMSAQP.

Belongs to the G-protein coupled receptor 1 family. In terms of tissue distribution, the different isoforms are expressed in specific, but overlapping sets of sensory, inter- and motor neurons, including AIY, AIZ and RIA interneurons. They are also expressed in pharyngeal cells, head muscles and excretory gland cells.

The protein resides in the cell membrane. G-protein coupled receptor for tyramine, a known neurotransmitter and neuromodulator and direct precursor of octopamine. The rank order of potency is tyramine &gt; octopamine &gt; dopamine &gt; serotonin &gt; epinephrine = norepinephrine. This chain is Tyramine receptor Ser-2 (ser-2), found in Caenorhabditis elegans.